We begin with the raw amino-acid sequence, 130 residues long: Small ribosomal subunit protein uS8 (130 aa).

Belongs to the universal ribosomal protein uS8 family. Part of the 30S ribosomal subunit. Contacts proteins S5 and S12.

In terms of biological role, one of the primary rRNA binding proteins, it binds directly to 16S rRNA central domain where it helps coordinate assembly of the platform of the 30S subunit. The protein is Small ribosomal subunit protein uS8 of Hahella chejuensis (strain KCTC 2396).